A 193-amino-acid polypeptide reads, in one-letter code: Ion-translocating oxidoreductase complex subunit A (193 aa).

The next 6 helical transmembrane spans lie at 5-25, 39-59, 62-82, 102-122, 134-154, and 171-191; these read LLLL…FLGL, MGMG…AWAV, FILV…LVIA, LLGI…VALL, AVYG…FAAI, and SIAL…SGLV.

It belongs to the NqrDE/RnfAE family. As to quaternary structure, the complex is composed of six subunits: RnfA, RnfB, RnfC, RnfD, RnfE and RnfG.

It is found in the cell inner membrane. Functionally, part of a membrane-bound complex that couples electron transfer with translocation of ions across the membrane. The chain is Ion-translocating oxidoreductase complex subunit A from Edwardsiella ictaluri (strain 93-146).